The primary structure comprises 291 residues: Protease HtpX homolog (291 aa).

Helical transmembrane passes span Ile-4 to Leu-24 and Ser-39 to Ile-59. Position 144 (His-144) interacts with Zn(2+). Glu-145 is an active-site residue. A Zn(2+)-binding site is contributed by His-148. 2 helical membrane passes run Leu-159 to Val-179 and Val-199 to Phe-219. A Zn(2+)-binding site is contributed by Glu-224.

This sequence belongs to the peptidase M48B family. Requires Zn(2+) as cofactor.

The protein localises to the cell inner membrane. The sequence is that of Protease HtpX homolog from Polaromonas naphthalenivorans (strain CJ2).